The chain runs to 316 residues: Beta-ketoacyl-[acyl-carrier-protein] synthase III (316 aa).

Residues Cys-112 and His-243 contribute to the active site. An ACP-binding region spans residues 244 to 248 (QANLR). Asn-273 is an active-site residue.

It belongs to the thiolase-like superfamily. FabH family. Homodimer.

Its subcellular location is the cytoplasm. It catalyses the reaction malonyl-[ACP] + acetyl-CoA + H(+) = 3-oxobutanoyl-[ACP] + CO2 + CoA. Its pathway is lipid metabolism; fatty acid biosynthesis. Functionally, catalyzes the condensation reaction of fatty acid synthesis by the addition to an acyl acceptor of two carbons from malonyl-ACP. Catalyzes the first condensation reaction which initiates fatty acid synthesis and may therefore play a role in governing the total rate of fatty acid production. Possesses both acetoacetyl-ACP synthase and acetyl transacylase activities. Its substrate specificity determines the biosynthesis of branched-chain and/or straight-chain of fatty acids. In Yersinia pestis (strain Pestoides F), this protein is Beta-ketoacyl-[acyl-carrier-protein] synthase III.